Consider the following 209-residue polypeptide: Peptide methionine sulfoxide reductase MsrA (209 aa).

Residue cysteine 51 is part of the active site.

The protein belongs to the MsrA Met sulfoxide reductase family.

It catalyses the reaction L-methionyl-[protein] + [thioredoxin]-disulfide + H2O = L-methionyl-(S)-S-oxide-[protein] + [thioredoxin]-dithiol. The catalysed reaction is [thioredoxin]-disulfide + L-methionine + H2O = L-methionine (S)-S-oxide + [thioredoxin]-dithiol. Has an important function as a repair enzyme for proteins that have been inactivated by oxidation. Catalyzes the reversible oxidation-reduction of methionine sulfoxide in proteins to methionine. In Vibrio vulnificus (strain CMCP6), this protein is Peptide methionine sulfoxide reductase MsrA.